Here is a 543-residue protein sequence, read N- to C-terminus: Lipoyl synthase, apicoplast (543 aa).

The first 63 residues, 1-63 (MAYFFDFPTD…LFSLLSASQS (63 aa)), serve as a signal peptide directing secretion. [4Fe-4S] cluster is bound by residues Cys-252, Cys-257, Cys-263, Cys-278, Cys-282, Cys-285, and Ser-493. A Radical SAM core domain is found at 264–482 (WNGGTATLIL…QDIAEEMGFK (219 aa)).

Belongs to the radical SAM superfamily. Lipoyl synthase family. It depends on [4Fe-4S] cluster as a cofactor.

It localises to the plastid. Its subcellular location is the apicoplast. It catalyses the reaction [[Fe-S] cluster scaffold protein carrying a second [4Fe-4S](2+) cluster] + N(6)-octanoyl-L-lysyl-[protein] + 2 oxidized [2Fe-2S]-[ferredoxin] + 2 S-adenosyl-L-methionine + 4 H(+) = [[Fe-S] cluster scaffold protein] + N(6)-[(R)-dihydrolipoyl]-L-lysyl-[protein] + 4 Fe(3+) + 2 hydrogen sulfide + 2 5'-deoxyadenosine + 2 L-methionine + 2 reduced [2Fe-2S]-[ferredoxin]. The protein operates within protein modification; protein lipoylation via endogenous pathway; protein N(6)-(lipoyl)lysine from octanoyl-[acyl-carrier-protein]: step 2/2. Catalyzes the radical-mediated insertion of two sulfur atoms into the C-6 and C-8 positions of the octanoyl moiety bound to the lipoyl domains of lipoate-dependent enzymes, thereby converting the octanoylated domains into lipoylated derivatives. In Toxoplasma gondii, this protein is Lipoyl synthase, apicoplast.